We begin with the raw amino-acid sequence, 82 residues long: Putative defensin-like protein 134 (82 aa).

The signal sequence occupies residues 1 to 26 (MEVRSLNLCFLLVLVLLMSPAPTAVA). Disulfide bonds link Cys32-Cys79, Cys42-Cys68, Cys47-Cys74, and Cys51-Cys76.

It belongs to the DEFL family.

The protein resides in the secreted. This chain is Putative defensin-like protein 134, found in Arabidopsis thaliana (Mouse-ear cress).